The sequence spans 305 residues: Putative glutamine--fructose-6-phosphate aminotransferase [isomerizing] (305 aa).

C2 functions as the Nucleophile; for GATase activity in the catalytic mechanism. The Glutamine amidotransferase type-2 domain maps to 2 to 305 (CGIFGYCNFL…RLCITSAVCE (304 aa)).

The enzyme catalyses D-fructose 6-phosphate + L-glutamine = D-glucosamine 6-phosphate + L-glutamate. The protein operates within nucleotide-sugar biosynthesis; UDP-N-acetyl-alpha-D-glucosamine biosynthesis; alpha-D-glucosamine 6-phosphate from D-fructose 6-phosphate: step 1/1. In terms of biological role, involved in amino sugar synthesis (formation of chitin, supplies the amino sugars of asparagine-linked oligosaccharides of glycoproteins). The sequence is that of Putative glutamine--fructose-6-phosphate aminotransferase [isomerizing] from Saccharomyces cerevisiae (strain Lalvin EC1118 / Prise de mousse) (Baker's yeast).